The sequence spans 284 residues: Nodulation protein O (284 aa).

Residues Met1–Asn27 are disordered. 5 Hemolysin-type calcium-binding repeats span residues Lys13–Ile30, Asp31–Ile48, Trp58–Leu75, His94–Leu111, and Val112–Phe129. Ca(2+)-binding residues include Asp100, Asp109, Asp118, and Asp127. Residues Asp208–Asp222 are export signal (aspartic acid box).

It localises to the secreted. In terms of biological role, the NodO protein may play a role in nodule development by direct interaction with the root hair cells or some other plant surface in a calcium-dependent manner. The protein is Nodulation protein O (nodO) of Rhizobium leguminosarum bv. viciae.